Reading from the N-terminus, the 642-residue chain is Mediator of RNA polymerase II transcription subunit 17 (642 aa).

Residues alanine 210–asparagine 232 are disordered. Positions serine 220–asparagine 232 are enriched in low complexity.

It belongs to the Mediator complex subunit 17 family. In terms of assembly, component of the Mediator complex, which includes at least CDK8, MED4, MED6, MED11, MED14, MED17, MED18, MED20, MED21, MED22, MED27, MED28, MED30 and MED31. Interacts with Hsf.

It is found in the nucleus. It localises to the chromosome. Component of the Mediator complex, a coactivator involved in the regulated transcription of nearly all RNA polymerase II-dependent genes. Mediator functions as a bridge to convey information from gene-specific regulatory proteins to the basal RNA polymerase II transcription machinery. Mediator is recruited to promoters by direct interactions with regulatory proteins and serves as a scaffold for the assembly of a functional preinitiation complex with RNA polymerase II and the general transcription factors. Required for activated transcription of the MtnA, MtnB and MtnD genes. Negatively regulates sex comb development. This chain is Mediator of RNA polymerase II transcription subunit 17 (MED17), found in Drosophila melanogaster (Fruit fly).